Reading from the N-terminus, the 299-residue chain is Ribosome-inactivating protein saporin-6 (299 aa).

The first 24 residues, 1–24 (MKIYVVATIAWILLQFSAWTTTDA), serve as a signal peptide directing secretion. The active site involves glutamate 200. The propeptide occupies 278–299 (SSNEANSTVRHYGPLKPTLLIT). N-linked (GlcNAc...) asparagine glycosylation is present at asparagine 283.

It belongs to the ribosome-inactivating protein family. Type 1 RIP subfamily. Seeds and leaves of the plant.

The catalysed reaction is Endohydrolysis of the N-glycosidic bond at one specific adenosine on the 28S rRNA.. Ribosome-inactivating protein of type 1, inhibits protein synthesis in animal cells. Useful as immunotoxin for pharmacological applications. The polypeptide is Ribosome-inactivating protein saporin-6 (SAP6) (Saponaria officinalis (Common soapwort)).